We begin with the raw amino-acid sequence, 808 residues long: uncharacterized protein (808 aa).

Residues 6-41 (SRSEKVKRIFQQFDGNHDGGLNREEMAALVVAVNPR) form the EF-hand 1 domain. TPR repeat units follow at residues 234 to 267 (FDGHMAIGRVLYEHQLFKEALVSFKRACELQPTD), 269 to 301 (RPHFKAGNCLYVLGKCKESKDEFLLALEAAESG), 310 to 343 (PQIYVNLGIALEGEGMVLSACEYYREAAILCPTH), 344 to 377 (FRALKLLGSALFGVGEYRAAVKALEEAIYLKPDY), 378 to 411 (ADAHCDLASSLHSMGEDERAIEVFQRAIDLKPGH), 412 to 445 (VDALYNLGGLYMDLGRFQRASEMYTRVLTVWPNH), and 447 to 479 (RAQLNKAVSLLGAGETEEAKRALKEALKLTNRV). Residues 600-635 (AIKAINEKILALLDDSGSGRVDMGMFYAVIAPLCGG) form the EF-hand 2 domain. Residues 773-794 (FKQEEYKFREYESEAEAMKAKC) are a coiled coil.

This is an uncharacterized protein from Arabidopsis thaliana (Mouse-ear cress).